We begin with the raw amino-acid sequence, 164 residues long: Protein-export protein SecB (164 aa).

This sequence belongs to the SecB family. Homotetramer, a dimer of dimers. One homotetramer interacts with 1 SecA dimer.

The protein resides in the cytoplasm. Functionally, one of the proteins required for the normal export of preproteins out of the cell cytoplasm. It is a molecular chaperone that binds to a subset of precursor proteins, maintaining them in a translocation-competent state. It also specifically binds to its receptor SecA. The protein is Protein-export protein SecB of Shewanella denitrificans (strain OS217 / ATCC BAA-1090 / DSM 15013).